Consider the following 441-residue polypeptide: Inositol hexakisphosphate kinase 1 (441 aa).

The interval 100–175 (ETVEQDDTTE…MLDGNSGLSS (76 aa)) is disordered. Over residues 113-123 (PRRKHSRRSLH) the composition is skewed to basic residues. The span at 137 to 149 (SLSLETSESSQEA) shows a compositional bias: low complexity. Over residues 150–160 (KSPKVELHSHS) the composition is skewed to basic and acidic residues. S151 carries the post-translational modification Phosphoserine. 220–228 (PCVLDLKMG) contributes to the substrate binding site. Positions 370–392 (SSCGPSTSPSNTSPEAGPSSQPK) are disordered. Residues 372–391 (CGPSTSPSNTSPEAGPSSQP) show a composition bias toward polar residues.

It belongs to the inositol phosphokinase (IPK) family.

It is found in the cytoplasm. It localises to the nucleus. It carries out the reaction 1D-myo-inositol hexakisphosphate + ATP = 5-diphospho-1D-myo-inositol 1,2,3,4,6-pentakisphosphate + ADP. It catalyses the reaction 1-diphospho-1D-myo-inositol 2,3,4,5,6-pentakisphosphate + ATP + H(+) = 1,5-bis(diphospho)-1D-myo-inositol 2,3,4,6-tetrakisphosphate + ADP. Its function is as follows. Converts inositol hexakisphosphate (InsP6) to diphosphoinositol pentakisphosphate (InsP7/PP-InsP5). Converts 1,3,4,5,6-pentakisphosphate (InsP5) to PP-InsP4. This chain is Inositol hexakisphosphate kinase 1 (IP6K1), found in Homo sapiens (Human).